The following is a 334-amino-acid chain: MSGFGDFTTICETAPLPLCAAVGPVLQATGRTGIEPECYARNIELANTIIFEGATAVMHIVALVMTVIMILHVRSKFTAVGRKEILSFFYLYMLLSAMSLVIDAGVVPPGSDPYPYLVSVQNGFSSAVITCLLINGFVGFQLYEDGTPLSVWMLRISTLAAFTISFLVSLATFKSWAGLSPTNTVGLFVVLYLLNAIQLFIYVAMQILLVTRTLHDRWPLGDIAFGIFFFVAGQVFLYAFSSKICNAISHYLDGLFLATVCNLLGVMMVYKYWDSITKEDLEFSVGTRMNNWEVKELLPEEERRATVFSEDLYGQNSSYDLPYSPGAARYSAKY.

7 helical membrane-spanning segments follow: residues 49 to 69 (IIFE…TVIM), 88 to 108 (FFYL…GVVP), 123 to 143 (GFSS…FQLY), 159 to 179 (LAAF…WAGL), 185 to 205 (VGLF…YVAM), 220 to 240 (LGDI…LYAF), and 250 to 270 (HYLD…MMVY).

The protein belongs to the CHS7 family. As to quaternary structure, interacts with CHS3.

The protein localises to the endoplasmic reticulum membrane. Its function is as follows. Chaperone required for the export of the chitin synthase CHS3 from the endoplasmic reticulum. The chain is Chitin synthase export chaperone (CHS7) from Gibberella zeae (strain ATCC MYA-4620 / CBS 123657 / FGSC 9075 / NRRL 31084 / PH-1) (Wheat head blight fungus).